The chain runs to 225 residues: Ureidoacrylate amidohydrolase RutB (225 aa).

Asp-22 serves as the catalytic Proton acceptor. Lys-131 is a catalytic residue. Residue Cys-164 is the Nucleophile of the active site.

The protein belongs to the isochorismatase family. RutB subfamily.

It carries out the reaction (Z)-3-ureidoacrylate + H2O + H(+) = (Z)-3-aminoacrylate + NH4(+) + CO2. The enzyme catalyses (Z)-3-ureidoacrylate + H2O = (Z)-3-aminoacrylate + carbamate + H(+). It catalyses the reaction (Z)-2-methylureidoacrylate + H2O + H(+) = (Z)-2-methylaminoacrylate + NH4(+) + CO2. In terms of biological role, hydrolyzes ureidoacrylate to form aminoacrylate and carbamate. The carbamate hydrolyzes spontaneously, thereby releasing one of the nitrogen atoms of the pyrimidine ring as ammonia and one of its carbon atoms as CO2. The sequence is that of Ureidoacrylate amidohydrolase RutB from Caulobacter vibrioides (strain ATCC 19089 / CIP 103742 / CB 15) (Caulobacter crescentus).